A 188-amino-acid chain; its full sequence is MASYYSNDFRPGLKIMFEGEPYAVESSEFVKPGKGQAFARVKMRRLLTGGRVEKTFKSTDSLEGADVNDMNLTYLYNDGEFWHFMNNETYEQLQADAKAVGDNGKWLIDQAECIVTLWNGQPIAVTPPNFVELEIVDTDPGLKGDTAGTGGKPATLSTGAVVKVPLFVQVGEIIKVDTRSGEYVSRVK.

Lysine 34 carries the post-translational modification N6-(3,6-diaminohexanoyl)-5-hydroxylysine.

It belongs to the elongation factor P family. In terms of processing, may be beta-lysylated on the epsilon-amino group of Lys-34 by the combined action of EpmA and EpmB, and then hydroxylated on the C5 position of the same residue by EpmC (if this protein is present). Lysylation is critical for the stimulatory effect of EF-P on peptide-bond formation. The lysylation moiety may extend toward the peptidyltransferase center and stabilize the terminal 3-CCA end of the tRNA. Hydroxylation of the C5 position on Lys-34 may allow additional potential stabilizing hydrogen-bond interactions with the P-tRNA.

It is found in the cytoplasm. The protein operates within protein biosynthesis; polypeptide chain elongation. Involved in peptide bond synthesis. Alleviates ribosome stalling that occurs when 3 or more consecutive Pro residues or the sequence PPG is present in a protein, possibly by augmenting the peptidyl transferase activity of the ribosome. Modification of Lys-34 is required for alleviation. The chain is Elongation factor P from Yersinia pseudotuberculosis serotype O:1b (strain IP 31758).